The primary structure comprises 218 residues: Ribosome maturation factor RimM (218 aa).

The PRC barrel domain maps to 141-214 (GELWWDRDLV…HIVVDPPPGL (74 aa)).

It belongs to the RimM family. As to quaternary structure, binds ribosomal protein uS19.

Its subcellular location is the cytoplasm. Functionally, an accessory protein needed during the final step in the assembly of 30S ribosomal subunit, possibly for assembly of the head region. Essential for efficient processing of 16S rRNA. May be needed both before and after RbfA during the maturation of 16S rRNA. It has affinity for free ribosomal 30S subunits but not for 70S ribosomes. The sequence is that of Ribosome maturation factor RimM from Parafrankia sp. (strain EAN1pec).